The primary structure comprises 543 residues: Protein P78/83 (543 aa).

Disordered regions lie at residues 147 to 222 (QALP…QPAA), 235 to 325 (RNEK…SLSN), and 373 to 400 (MAKS…ANTP). Residues 182 to 221 (AAPPPPPSPVPNIPAPPPPPPPSMSELPPAPPMPTEPQPA) are compositionally biased toward pro residues. One can recognise a WH2 domain in the interval 226–246 (DRQQLLEAIRNEKNRTRLRPV). Over residues 271–321 (PKPPSASPPPPPPPPPPPAPPAPPPMVDLSSAPPPPPLVDLPSEMLPPPAP) the composition is skewed to pro residues. Polar residues predominate over residues 375 to 384 (KSSSEATSND).

In terms of assembly, forms a complex with proteins C42 and E27. Interacts with host actin-related protein 2/3 complex. Interacts with protein Ac102.

The protein resides in the host cytoplasm. Its subcellular location is the host nucleus. Its function is as follows. Plays a role in the transport of the nucleocapsids from the cytoplasm toward the host nucleus together with the host actin-polymerizing Arp2/3 complex. The protein is Protein P78/83 (P61) of Lepidoptera (butterflies and moths).